A 2771-amino-acid chain; its full sequence is Kinesin-like protein KIN-12D (2771 aa).

Composition is skewed to basic and acidic residues over residues 1–13 and 40–54; these read MSKETKLSRRDSD and KNPKHECGSKIDRTP. Disordered regions lie at residues 1 to 73 and 117 to 139; these read MSKE…TPDK and YSETNSTQNTPTKSVSKPPGSCY. The span at 118–131 shows a compositional bias: polar residues; sequence SETNSTQNTPTKSV. Residues 193–530 enclose the Kinesin motor domain; sequence NVQILIRVRP…LKFAQRAKLI (338 aa). 274-281 provides a ligand contact to ATP; sequence GQTGSGKT. 3 microtubules-binding regions span residues 400-404, 431-437, and 479-483; these read SSRSH, VDLAGSE, and HIPYR. 5 coiled-coil regions span residues 1033-1110, 1267-1331, 1410-1505, 2108-2390, and 2512-2677; these read AATA…NEME, ELKQ…MKEK, IILL…YVEN, ELED…EQVK, and RERD…LAQE. A compositionally biased stretch (basic residues) spans 2727 to 2736; it reads LKGKAKSRRS. The segment at 2727–2771 is disordered; that stretch reads LKGKAKSRRSRNPERKMPSMPSPRRSWSQSPRSMSQVPFFSSLDR. Over residues 2744–2762 the composition is skewed to low complexity; it reads PSMPSPRRSWSQSPRSMSQ.

It belongs to the TRAFAC class myosin-kinesin ATPase superfamily. Kinesin family. KIN-12 subfamily. Expressed in tissues enriched in dividing cells, such as root meristems, root primordia, and leaf primordia/young leaves.

It is found in the cytoplasm. Its subcellular location is the cytoskeleton. The protein localises to the phragmoplast. Functionally, involved in the spatial control of cytokinesis by a proper phragmoplast guidance. The chain is Kinesin-like protein KIN-12D from Arabidopsis thaliana (Mouse-ear cress).